The chain runs to 320 residues: MAVAENVGVKVDSSNNQNIDNNTTSLVETKPSCSDDQTPKSKSSVLTNELIQRTSEVNLKSEISHLNPMAKEFVPSFLAQTHHSEFWGNRFWFTNHFPKQTIFLIGQFATMRRNFGKGRPWITKKTNLVQNEDMIKRTVYVSDIDNQVTEEQLASLFLSCGQVVDCRMCGDYKSILRFAFIEFTDAEGARSALRKSGTMFGSHPIRVFMSKTAIAPVNPSFLPQSKDELEKCGKTVYCTNIDKEVTKMELENFFKTVCGEVHHLRLLGDFYHQTRIAFVEFKLAESAISALNCSGVVLGELPIRVSPSKTPVRLHHSDLN.

Residues 1 to 44 (MAVAENVGVKVDSSNNQNIDNNTTSLVETKPSCSDDQTPKSKSS) are disordered. The segment covering 12-44 (DSSNNQNIDNNTTSLVETKPSCSDDQTPKSKSS) has biased composition (polar residues). The short motif at 65–75 (HLNPMAKEFVP) is the PAM2-like element. RRM domains follow at residues 137-212 (RTVY…MSKT) and 234-310 (KTVY…PSKT).

The chain is Polyadenylate-binding protein-interacting protein 13 (CID13) from Arabidopsis thaliana (Mouse-ear cress).